The following is a 196-amino-acid chain: Pyridoxal 5'-phosphate synthase subunit PdxT (196 aa).

Position 47 to 49 (G47 to S49) interacts with L-glutamine. C79 (nucleophile) is an active-site residue. L-glutamine is bound by residues R106 and I134–R135. Catalysis depends on charge relay system residues H170 and E172.

It belongs to the glutaminase PdxT/SNO family. In terms of assembly, in the presence of PdxS, forms a dodecamer of heterodimers. Only shows activity in the heterodimer.

It catalyses the reaction aldehydo-D-ribose 5-phosphate + D-glyceraldehyde 3-phosphate + L-glutamine = pyridoxal 5'-phosphate + L-glutamate + phosphate + 3 H2O + H(+). It carries out the reaction L-glutamine + H2O = L-glutamate + NH4(+). It functions in the pathway cofactor biosynthesis; pyridoxal 5'-phosphate biosynthesis. Functionally, catalyzes the hydrolysis of glutamine to glutamate and ammonia as part of the biosynthesis of pyridoxal 5'-phosphate. The resulting ammonia molecule is channeled to the active site of PdxS. The polypeptide is Pyridoxal 5'-phosphate synthase subunit PdxT (Bacillus cereus (strain B4264)).